The chain runs to 94 residues: Pyrimidine/purine nucleoside phosphorylase (94 aa).

Belongs to the nucleoside phosphorylase PpnP family.

It catalyses the reaction a purine D-ribonucleoside + phosphate = a purine nucleobase + alpha-D-ribose 1-phosphate. The enzyme catalyses adenosine + phosphate = alpha-D-ribose 1-phosphate + adenine. It carries out the reaction cytidine + phosphate = cytosine + alpha-D-ribose 1-phosphate. The catalysed reaction is guanosine + phosphate = alpha-D-ribose 1-phosphate + guanine. It catalyses the reaction inosine + phosphate = alpha-D-ribose 1-phosphate + hypoxanthine. The enzyme catalyses thymidine + phosphate = 2-deoxy-alpha-D-ribose 1-phosphate + thymine. It carries out the reaction uridine + phosphate = alpha-D-ribose 1-phosphate + uracil. The catalysed reaction is xanthosine + phosphate = alpha-D-ribose 1-phosphate + xanthine. Catalyzes the phosphorolysis of diverse nucleosides, yielding D-ribose 1-phosphate and the respective free bases. Can use uridine, adenosine, guanosine, cytidine, thymidine, inosine and xanthosine as substrates. Also catalyzes the reverse reactions. The polypeptide is Pyrimidine/purine nucleoside phosphorylase (Salmonella agona (strain SL483)).